The primary structure comprises 127 residues: UPF0166 protein PH1503 (127 aa).

The protein belongs to the UPF0166 family.

This is UPF0166 protein PH1503 from Pyrococcus horikoshii (strain ATCC 700860 / DSM 12428 / JCM 9974 / NBRC 100139 / OT-3).